We begin with the raw amino-acid sequence, 250 residues long: Bacteriorhodopsin-II (250 aa).

7 consecutive transmembrane segments (helical) span residues 14–34 (EGIW…YFMA), 49–69 (VITI…FFGF), 89–109 (YADW…LAGA), 114–134 (MASL…ATLM), 142–162 (AFWT…VVVV), 183–203 (IILV…EGLG), and 210–230 (ETLL…FILL). Lys-222 carries the N6-(retinylidene)lysine modification.

The protein belongs to the archaeal/bacterial/fungal opsin family. Post-translationally, the covalent binding of retinal to the apoprotein, bacterioopsin, generates bacteriorhodopsin.

Its subcellular location is the membrane. In terms of biological role, light-driven proton pump. The sequence is that of Bacteriorhodopsin-II (xop1) from Haloarcula marismortui (strain ATCC 43049 / DSM 3752 / JCM 8966 / VKM B-1809) (Halobacterium marismortui).